The primary structure comprises 314 residues: Phosphoribosylaminoimidazole-succinocarboxamide synthase (314 aa).

It belongs to the SAICAR synthetase family.

The enzyme catalyses 5-amino-1-(5-phospho-D-ribosyl)imidazole-4-carboxylate + L-aspartate + ATP = (2S)-2-[5-amino-1-(5-phospho-beta-D-ribosyl)imidazole-4-carboxamido]succinate + ADP + phosphate + 2 H(+). The protein operates within purine metabolism; IMP biosynthesis via de novo pathway; 5-amino-1-(5-phospho-D-ribosyl)imidazole-4-carboxamide from 5-amino-1-(5-phospho-D-ribosyl)imidazole-4-carboxylate: step 1/2. In Bacteroides thetaiotaomicron (strain ATCC 29148 / DSM 2079 / JCM 5827 / CCUG 10774 / NCTC 10582 / VPI-5482 / E50), this protein is Phosphoribosylaminoimidazole-succinocarboxamide synthase.